The chain runs to 911 residues: Valine--tRNA ligase (911 aa).

The 'HIGH' region motif lies at 57–67; the sequence is PTVSGSLHVGH. The 'KMSKS' region signature appears at 599–603; sequence KMSKS. Lys602 is an ATP binding site. Positions 882-911 are disordered; the sequence is EESAAEDAPETEVAVEASELGEPPAKKPKH.

This sequence belongs to the class-I aminoacyl-tRNA synthetase family. ValS type 2 subfamily. Monomer.

Its subcellular location is the cytoplasm. It catalyses the reaction tRNA(Val) + L-valine + ATP = L-valyl-tRNA(Val) + AMP + diphosphate. Functionally, catalyzes the attachment of valine to tRNA(Val). As ValRS can inadvertently accommodate and process structurally similar amino acids such as threonine, to avoid such errors, it has a 'posttransfer' editing activity that hydrolyzes mischarged Thr-tRNA(Val) in a tRNA-dependent manner. This Bifidobacterium longum (strain DJO10A) protein is Valine--tRNA ligase.